The chain runs to 626 residues: DNA mismatch repair protein MutL (626 aa).

The protein belongs to the DNA mismatch repair MutL/HexB family.

In terms of biological role, this protein is involved in the repair of mismatches in DNA. It is required for dam-dependent methyl-directed DNA mismatch repair. May act as a 'molecular matchmaker', a protein that promotes the formation of a stable complex between two or more DNA-binding proteins in an ATP-dependent manner without itself being part of a final effector complex. This chain is DNA mismatch repair protein MutL, found in Chlorobium luteolum (strain DSM 273 / BCRC 81028 / 2530) (Pelodictyon luteolum).